A 333-amino-acid chain; its full sequence is NADH-quinone oxidoreductase subunit H (333 aa).

8 helical membrane-spanning segments follow: residues 15–35, 88–108, 117–137, 159–179, 191–211, 250–270, 273–293, and 313–333; these read LVIF…FVTY, FILA…TLPF, IGVG…GVVA, ISYE…TGSL, VWYI…AVAE, LFAM…PVMF, FIPG…VLIW, and VLFP…ELFF.

Belongs to the complex I subunit 1 family. NDH-1 is composed of 14 different subunits. Subunits NuoA, H, J, K, L, M, N constitute the membrane sector of the complex.

The protein resides in the cell membrane. It catalyses the reaction a quinone + NADH + 5 H(+)(in) = a quinol + NAD(+) + 4 H(+)(out). Its function is as follows. NDH-1 shuttles electrons from NADH, via FMN and iron-sulfur (Fe-S) centers, to quinones in the respiratory chain. The immediate electron acceptor for the enzyme in this species is believed to be ubiquinone. Couples the redox reaction to proton translocation (for every two electrons transferred, four hydrogen ions are translocated across the cytoplasmic membrane), and thus conserves the redox energy in a proton gradient. This subunit may bind ubiquinone. The protein is NADH-quinone oxidoreductase subunit H of Geobacillus sp. (strain WCH70).